Consider the following 138-residue polypeptide: Large ribosomal subunit protein uL16 (138 aa).

Over residues 1–17 the composition is skewed to basic residues; it reads MLIPRKVKHRKQHHPRQ. Positions 1 to 22 are disordered; sequence MLIPRKVKHRKQHHPRQRGIAS.

Belongs to the universal ribosomal protein uL16 family. As to quaternary structure, part of the 50S ribosomal subunit.

Functionally, binds 23S rRNA and is also seen to make contacts with the A and possibly P site tRNAs. The protein is Large ribosomal subunit protein uL16 of Mycobacterium leprae (strain Br4923).